We begin with the raw amino-acid sequence, 125 residues long: Phosphoribosyl-AMP cyclohydrolase (125 aa).

D74 lines the Mg(2+) pocket. C75 contributes to the Zn(2+) binding site. Mg(2+) is bound by residues D76 and D78. Zn(2+)-binding residues include C92 and C99.

This sequence belongs to the PRA-CH family. In terms of assembly, homodimer. It depends on Mg(2+) as a cofactor. Requires Zn(2+) as cofactor.

It is found in the cytoplasm. The catalysed reaction is 1-(5-phospho-beta-D-ribosyl)-5'-AMP + H2O = 1-(5-phospho-beta-D-ribosyl)-5-[(5-phospho-beta-D-ribosylamino)methylideneamino]imidazole-4-carboxamide. It functions in the pathway amino-acid biosynthesis; L-histidine biosynthesis; L-histidine from 5-phospho-alpha-D-ribose 1-diphosphate: step 3/9. In terms of biological role, catalyzes the hydrolysis of the adenine ring of phosphoribosyl-AMP. This chain is Phosphoribosyl-AMP cyclohydrolase, found in Trichlorobacter lovleyi (strain ATCC BAA-1151 / DSM 17278 / SZ) (Geobacter lovleyi).